The following is a 1064-amino-acid chain: Valine--tRNA ligase, mitochondrial (1064 aa).

The transit peptide at 1-26 (MPHLPLASFRPPFWGLRHSRGLPRFH) directs the protein to the mitochondrion. Positions 25–65 (FHSVSTQSEPHGSPISRRNREAKQKRLREKQATLETDIAGE) are disordered. The span at 42–56 (RNREAKQKRLREKQA) shows a compositional bias: basic and acidic residues. Residues 146–156 (PNVTGSLHIGH) carry the 'HIGH' region motif. The short motif at 659–663 (KMSKS) is the 'KMSKS' region element. K662 serves as a coordination point for ATP.

The protein belongs to the class-I aminoacyl-tRNA synthetase family.

Its subcellular location is the mitochondrion. The enzyme catalyses tRNA(Val) + L-valine + ATP = L-valyl-tRNA(Val) + AMP + diphosphate. In terms of biological role, catalyzes the attachment of valine to tRNA(Val) in a two-step reaction: valine is first activated by ATP to form Val-AMP and then transferred to the acceptor end of tRNA(Val). In Macaca mulatta (Rhesus macaque), this protein is Valine--tRNA ligase, mitochondrial (VARS2).